The following is a 1204-amino-acid chain: TPR repeat-containing protein DDB_G0287999 (1204 aa).

Over residues 32-48 the composition is skewed to low complexity; the sequence is TTDTTTTTSTSTTTDTD. Positions 32–55 are disordered; that stretch reads TTDTTTTTSTSTTTDTDTNSEKSN. 3 TPR repeats span residues 263 to 296, 379 to 412, and 583 to 617; these read SKGL…YKDL, NDSN…DQLY, and IQHF…GSVT. Residues 360-387 are disordered; that stretch reads QPPPQEQQLMDDDSNSNSNNDSNNIIKN. Positions 374–387 are enriched in low complexity; the sequence is NSNSNNDSNNIIKN. 2 disordered regions span residues 639 to 660 and 761 to 797; these read NNNN…NNNN and DDND…KTTT. Over residues 766–778 the composition is skewed to low complexity; the sequence is DNNNNNNNNNNNN.

The polypeptide is TPR repeat-containing protein DDB_G0287999 (Dictyostelium discoideum (Social amoeba)).